The primary structure comprises 210 residues: Noranthrone monooxygenase (210 aa).

4 helical membrane-spanning segments follow: residues 59 to 79 (TGSFLTGAMMNLHLLTIPILI), 105 to 125 (GIALVTGALYGYAAWAKYSVG), 131 to 151 (WMVAGVTTVSMVPYTWMFMNA), and 188 to 208 (VRALFPLAGSVMGMLGVCGVV).

Belongs to the anthrone oxygenase family.

It is found in the membrane. It catalyses the reaction noranthrone + O2 = norsolorinic acid + H2O. It participates in mycotoxin biosynthesis; aflatoxin biosynthesis. Functionally, monooxygenase that converts norsolorinic acid anthrone to norsolorinic acid during aflatoxin biosynthesis. This Aspergillus flavus (strain ATCC 200026 / FGSC A1120 / IAM 13836 / NRRL 3357 / JCM 12722 / SRRC 167) protein is Noranthrone monooxygenase (hypC).